Consider the following 314-residue polypeptide: Coiled-coil domain-containing protein 42 like-2 (314 aa).

Coiled coils occupy residues 34 to 133 (RLLE…KGTL) and 175 to 231 (NKLL…FQWE).

It belongs to the CFAP73 family.

The sequence is that of Coiled-coil domain-containing protein 42 like-2 from Xenopus tropicalis (Western clawed frog).